The chain runs to 80 residues: Exodeoxyribonuclease 7 small subunit (80 aa).

This sequence belongs to the XseB family. Heterooligomer composed of large and small subunits.

Its subcellular location is the cytoplasm. The enzyme catalyses Exonucleolytic cleavage in either 5'- to 3'- or 3'- to 5'-direction to yield nucleoside 5'-phosphates.. Functionally, bidirectionally degrades single-stranded DNA into large acid-insoluble oligonucleotides, which are then degraded further into small acid-soluble oligonucleotides. In Pseudomonas fluorescens (strain SBW25), this protein is Exodeoxyribonuclease 7 small subunit.